Consider the following 98-residue polypeptide: MTMVYANIFLAFITSLMGLLMYRSHLMSSLLCLEGMMLSLFVMMTITILNSHFTLASMTPIILLVFAACEAALGLSLLVMVSNTYGTDYVQNLNLLQC.

3 consecutive transmembrane segments (helical) span residues 1–21, 29–49, and 61–81; these read MTMV…GLLM, SLLC…ITIL, and IILL…LVMV.

This sequence belongs to the complex I subunit 4L family. As to quaternary structure, core subunit of respiratory chain NADH dehydrogenase (Complex I) which is composed of 45 different subunits.

Its subcellular location is the mitochondrion inner membrane. It catalyses the reaction a ubiquinone + NADH + 5 H(+)(in) = a ubiquinol + NAD(+) + 4 H(+)(out). Its function is as follows. Core subunit of the mitochondrial membrane respiratory chain NADH dehydrogenase (Complex I) which catalyzes electron transfer from NADH through the respiratory chain, using ubiquinone as an electron acceptor. Part of the enzyme membrane arm which is embedded in the lipid bilayer and involved in proton translocation. The protein is NADH-ubiquinone oxidoreductase chain 4L (MT-ND4L) of Ommatophoca rossii (Ross seal).